Reading from the N-terminus, the 276-residue chain is Rhomboid protease GlpG (276 aa).

The next 6 membrane-spanning stretches (helical) occupy residues 94–114 (AGPL…LMQI), 142–162 (ALLH…WYLG), 168–188 (VLGT…SGWA), 193–213 (SGTY…YVWL), 229–249 (LMAF…GMSI), and 250–270 (ANAA…WDTY). Serine 201 serves as the catalytic Nucleophile. Histidine 254 is an active-site residue.

The protein belongs to the peptidase S54 family.

It is found in the cell inner membrane. It carries out the reaction Cleaves type-1 transmembrane domains using a catalytic dyad composed of serine and histidine that are contributed by different transmembrane domains.. Functionally, rhomboid-type serine protease that catalyzes intramembrane proteolysis. This chain is Rhomboid protease GlpG, found in Pectobacterium atrosepticum (strain SCRI 1043 / ATCC BAA-672) (Erwinia carotovora subsp. atroseptica).